Reading from the N-terminus, the 219-residue chain is Ribose-5-phosphate isomerase A (219 aa).

Substrate-binding positions include 28–31 (TGST), 81–84 (DGAD), and 94–97 (KGGG). The Proton acceptor role is filled by Glu-103. Lys-121 provides a ligand contact to substrate.

This sequence belongs to the ribose 5-phosphate isomerase family. As to quaternary structure, homodimer.

It catalyses the reaction aldehydo-D-ribose 5-phosphate = D-ribulose 5-phosphate. Its pathway is carbohydrate degradation; pentose phosphate pathway; D-ribose 5-phosphate from D-ribulose 5-phosphate (non-oxidative stage): step 1/1. Functionally, catalyzes the reversible conversion of ribose-5-phosphate to ribulose 5-phosphate. This Shewanella oneidensis (strain ATCC 700550 / JCM 31522 / CIP 106686 / LMG 19005 / NCIMB 14063 / MR-1) protein is Ribose-5-phosphate isomerase A.